The following is a 445-amino-acid chain: 3-phosphoshikimate 1-carboxyvinyltransferase (445 aa).

A disordered region spans residues 1-24 (MEHAATLPQTSRRPATPLTGTITV). The span at 7–22 (LPQTSRRPATPLTGTI) shows a compositional bias: polar residues. 3-phosphoshikimate contacts are provided by lysine 28, serine 29, and arginine 33. Lysine 28 serves as a coordination point for phosphoenolpyruvate. 2 residues coordinate phosphoenolpyruvate: glycine 101 and arginine 129. 4 residues coordinate 3-phosphoshikimate: serine 174, glutamine 176, aspartate 326, and lysine 353. Residue glutamine 176 coordinates phosphoenolpyruvate. The Proton acceptor role is filled by aspartate 326. Residues arginine 357 and arginine 399 each contribute to the phosphoenolpyruvate site.

This sequence belongs to the EPSP synthase family. In terms of assembly, monomer.

Its subcellular location is the cytoplasm. The enzyme catalyses 3-phosphoshikimate + phosphoenolpyruvate = 5-O-(1-carboxyvinyl)-3-phosphoshikimate + phosphate. Its pathway is metabolic intermediate biosynthesis; chorismate biosynthesis; chorismate from D-erythrose 4-phosphate and phosphoenolpyruvate: step 6/7. Functionally, catalyzes the transfer of the enolpyruvyl moiety of phosphoenolpyruvate (PEP) to the 5-hydroxyl of shikimate-3-phosphate (S3P) to produce enolpyruvyl shikimate-3-phosphate and inorganic phosphate. In Acidiphilium cryptum (strain JF-5), this protein is 3-phosphoshikimate 1-carboxyvinyltransferase.